Here is a 295-residue protein sequence, read N- to C-terminus: Protease HtpX (295 aa).

The next 2 membrane-spanning stretches (helical) occupy residues 4–24 (ILLFLATNLAVVLIASITLSL) and 42–62 (QLLVFCAVFGFAGSLFSLFIS). His-147 contacts Zn(2+). The active site involves Glu-148. His-151 is a binding site for Zn(2+). Helical transmembrane passes span 158 to 178 (VTLALVQGVVNTFVMFFARII) and 199 to 219 (ITTIFAELVLGFLASAIVMWF). Residue Glu-224 coordinates Zn(2+).

The protein belongs to the peptidase M48B family. It depends on Zn(2+) as a cofactor.

The protein resides in the cell inner membrane. In Pseudomonas syringae pv. syringae (strain B728a), this protein is Protease HtpX.